The sequence spans 275 residues: Large ribosomal subunit protein uL2 (275 aa).

A disordered region spans residues 224–251 (VMNPVDHPHGGGEGRSPIGRKAPVTPWG).

Belongs to the universal ribosomal protein uL2 family. As to quaternary structure, part of the 50S ribosomal subunit. Forms a bridge to the 30S subunit in the 70S ribosome.

One of the primary rRNA binding proteins. Required for association of the 30S and 50S subunits to form the 70S ribosome, for tRNA binding and peptide bond formation. It has been suggested to have peptidyltransferase activity; this is somewhat controversial. Makes several contacts with the 16S rRNA in the 70S ribosome. The sequence is that of Large ribosomal subunit protein uL2 from Heliobacterium modesticaldum (strain ATCC 51547 / Ice1).